The sequence spans 274 residues: Large ribosomal subunit protein uL2cz/uL2cy (274 aa).

Disordered stretches follow at residues 1-21 (MAIH…VDSQ) and 225-274 (PVDH…RRSK).

The protein belongs to the universal ribosomal protein uL2 family. As to quaternary structure, part of the 50S ribosomal subunit.

It localises to the plastid. The protein resides in the chloroplast. In Arabidopsis thaliana (Mouse-ear cress), this protein is Large ribosomal subunit protein uL2cz/uL2cy (rpl2-A).